We begin with the raw amino-acid sequence, 295 residues long: Ent-pimara-9(11),15-diene synthase (295 aa).

This sequence belongs to the terpene synthase family. Monomer. It depends on a divalent metal cation as a cofactor.

It carries out the reaction ent-copalyl diphosphate = ent-pimara-9(11),15-diene + diphosphate. It functions in the pathway antibiotic biosynthesis. Involved in viguiepinol biosynthesis. Catalyzes the conversion of copalyl diphosphate (ent-CDP) into pimara-9(11),15-diene (PMD). The chain is Ent-pimara-9(11),15-diene synthase from Streptomyces sp. (strain KO-3988).